We begin with the raw amino-acid sequence, 200 residues long: NAD(P)H dehydrogenase (quinone) (200 aa).

Residues 4–191 form the Flavodoxin-like domain; the sequence is VLVLYYSSYG…GGARYQGALV (188 aa). FMN-binding positions include 10-15 and 79-81; these read SSYGHI and TRF. Position 12 (Y12) interacts with NAD(+). W99 provides a ligand contact to substrate. Residues 114-120 and H135 each bind FMN; that span reads STASQHG.

Belongs to the WrbA family. FMN serves as cofactor.

It catalyses the reaction a quinone + NADH + H(+) = a quinol + NAD(+). It carries out the reaction a quinone + NADPH + H(+) = a quinol + NADP(+). The sequence is that of NAD(P)H dehydrogenase (quinone) from Rhodospirillum centenum (strain ATCC 51521 / SW).